The chain runs to 512 residues: CaM kinase-like vesicle-associated protein (512 aa).

A Protein kinase domain is found at 24–286 (YDLGQVIKTE…AEEAISHEWI (263 aa)). The segment at 328-347 (APEQSGTAATQSASDAATPG) is disordered. The segment covering 332 to 347 (SGTAATQSASDAATPG) has biased composition (low complexity). Ser392 is subject to Phosphoserine. Residues 393–512 (ADRSATPATD…AQESQRVETS (120 aa)) form a disordered region. The segment covering 398 to 439 (TPATDGSATPATDGSVTPATDGSITPATDGSVTPATDRSATP) has biased composition (polar residues). Residue Thr446 is modified to Phosphothreonine. Over residues 449–460 (TEESTVPATQSS) the composition is skewed to polar residues. The span at 461–478 (ALPAAKAAATPEPAVAQP) shows a compositional bias: low complexity. Thr470 carries the phosphothreonine modification.

The protein belongs to the protein kinase superfamily. CAMK Ser/Thr protein kinase family. In terms of assembly, interacts with calmodulin, in the presence of calcium. Ca(2+) is required as a cofactor.

Its subcellular location is the cell membrane. The protein resides in the cytoplasmic vesicle membrane. Functionally, does not appear to have detectable kinase activity. This chain is CaM kinase-like vesicle-associated protein (Camkv), found in Mus musculus (Mouse).